The chain runs to 357 residues: Type II methyltransferase M1.HgaI (357 aa).

One can recognise an SAM-dependent MTase C5-type domain in the interval 5–357; that stretch reads IMGLSLFSSA…NITREIFNEN (353 aa). The active site involves Cys83.

This sequence belongs to the class I-like SAM-binding methyltransferase superfamily. C5-methyltransferase family.

It catalyses the reaction a 2'-deoxycytidine in DNA + S-adenosyl-L-methionine = a 5-methyl-2'-deoxycytidine in DNA + S-adenosyl-L-homocysteine + H(+). Its function is as follows. A methylase that recognizes DNA with the sequence 5'-GCGTC-3', methylates C-2, and protects the DNA from cleavage by the HgaI endonuclease. The chain is Type II methyltransferase M1.HgaI (hgaIAM) from Avibacterium volantium (Pasteurella volantium).